The sequence spans 189 residues: Mercury resistance operon ORF3 (189 aa).

The segment at residues 1-27 (MTSPSPTARRTRLRRRTALALAAAATA) is a signal peptide (tat-type signal). The region spanning 38–189 (TKANTPATRA…IQDALKKAGA (152 aa)) is the Thioredoxin domain.

In terms of processing, predicted to be exported by the Tat system. The position of the signal peptide cleavage has not been experimentally proven.

Its subcellular location is the secreted. Its function is as follows. Probable mercury binding protein. This is Mercury resistance operon ORF3 from Streptomyces lividans.